A 670-amino-acid polypeptide reads, in one-letter code: ATP-dependent DNA helicase Rep (670 aa).

The 277-residue stretch at 1-277 folds into the UvrD-like helicase ATP-binding domain; sequence MLFNEHQKKA…IIMQHNYRSS (277 aa). Residues 22–29 and Arg275 each bind ATP; that span reads AGAGSGKT. Residues 278–562 form the UvrD-like helicase C-terminal domain; it reads GRILKVANAL…QLMTLHASKG (285 aa).

Belongs to the helicase family. UvrD subfamily. In terms of assembly, homodimer.

The catalysed reaction is Couples ATP hydrolysis with the unwinding of duplex DNA by translocating in the 3'-5' direction.. The enzyme catalyses ATP + H2O = ADP + phosphate + H(+). Rep helicase is a single-stranded DNA-dependent ATPase involved in DNA replication; it can initiate unwinding at a nick in the DNA. It binds to the single-stranded DNA and acts in a progressive fashion along the DNA in the 3' to 5' direction. This is ATP-dependent DNA helicase Rep from Buchnera aphidicola subsp. Baizongia pistaciae (strain Bp).